We begin with the raw amino-acid sequence, 92 residues long: Probable Fe(2+)-trafficking protein (92 aa).

Belongs to the Fe(2+)-trafficking protein family.

Its function is as follows. Could be a mediator in iron transactions between iron acquisition and iron-requiring processes, such as synthesis and/or repair of Fe-S clusters in biosynthetic enzymes. In Shewanella sp. (strain ANA-3), this protein is Probable Fe(2+)-trafficking protein.